We begin with the raw amino-acid sequence, 140 residues long: Putative pre-16S rRNA nuclease (140 aa).

Belongs to the YqgF nuclease family.

Its subcellular location is the cytoplasm. Functionally, could be a nuclease involved in processing of the 5'-end of pre-16S rRNA. This Yersinia pseudotuberculosis serotype O:1b (strain IP 31758) protein is Putative pre-16S rRNA nuclease.